The chain runs to 515 residues: Probable coatomer subunit delta (515 aa).

A compositionally biased stretch (basic and acidic residues) spans 161-180 (AKQAMAEKAKELKRAQKEAL). A disordered region spans residues 161 to 231 (AKQAMAEKAK…GGKALKLGGK (71 aa)). Low complexity predominate over residues 187–198 (SYQSSTGISSSS). In terms of domain architecture, MHD spans 276 to 515 (REVVHVRTEE…TFNSENFEIV (240 aa)).

The protein belongs to the adaptor complexes medium subunit family. Delta-COP subfamily. Oligomeric complex that consists of at least the alpha, beta, beta', gamma, delta, epsilon and zeta subunits.

The protein localises to the cytoplasm. Its subcellular location is the golgi apparatus membrane. It localises to the cytoplasmic vesicle. The protein resides in the COPI-coated vesicle membrane. The coatomer is a cytosolic protein complex that binds to dilysine motifs and reversibly associates with Golgi non-clathrin-coated vesicles, which further mediate biosynthetic protein transport from the ER, via the Golgi up to the trans Golgi network. Coatomer complex is required for budding from Golgi membranes, and is essential for the retrograde Golgi-to-ER transport of dilysine-tagged proteins. This is Probable coatomer subunit delta from Caenorhabditis elegans.